The following is a 444-amino-acid chain: Tol-Pal system protein TolB (444 aa).

Positions 1–19 are cleaved as a signal peptide; the sequence is MRNIIYFILSLLFSFASYA.

It belongs to the TolB family. The Tol-Pal system is composed of five core proteins: the inner membrane proteins TolA, TolQ and TolR, the periplasmic protein TolB and the outer membrane protein Pal. They form a network linking the inner and outer membranes and the peptidoglycan layer.

Its subcellular location is the periplasm. Part of the Tol-Pal system, which plays a role in outer membrane invagination during cell division and is important for maintaining outer membrane integrity. The protein is Tol-Pal system protein TolB of Rickettsia massiliae (strain Mtu5).